Consider the following 546-residue polypeptide: Sulfite oxidase, mitochondrial (546 aa).

The transit peptide at 1–80 directs the protein to the mitochondrion; the sequence is MLLQLYRSVV…YHEHRCRASQ (80 aa). A Cytochrome b5 heme-binding domain is found at 83–162; it reads PRMYSKEDVR…LAEYKIGELN (80 aa). Residue H119 participates in heme b binding. S124 carries the phosphoserine modification. Heme b contacts are provided by H144, Q146, and H148. The hinge stretch occupies residues 166–175; it reads SMSPSVEASD. Residues 176–402 form a moco domain region; the sequence is PYADDPIRHP…YSHWQRRDYK (227 aa). Mo-molybdopterin is bound by residues 216-220, C265, D323, H362, R367, and 378-380; these read FTRNH and HVK. The homodimerization stretch occupies residues 403–539; that stretch reads GFSPSVDWDT…RGVLSNAWHR (137 aa).

As to quaternary structure, homodimer. The cofactor is heme b. Mo-molybdopterin serves as cofactor.

The protein resides in the mitochondrion intermembrane space. The catalysed reaction is sulfite + O2 + H2O = sulfate + H2O2. Its pathway is energy metabolism; sulfur metabolism. In terms of biological role, catalyzes the oxidation of sulfite to sulfate, the terminal reaction in the oxidative degradation of sulfur-containing amino acids. This Mus musculus (Mouse) protein is Sulfite oxidase, mitochondrial (Suox).